A 216-amino-acid polypeptide reads, in one-letter code: Inorganic pyrophosphatase (216 aa).

Substrate-binding residues include Lys-39, Arg-53, and Tyr-65. Mg(2+) is bound by residues Asp-93, Asp-98, and Asp-131. Position 168 (Tyr-168) interacts with substrate.

Belongs to the PPase family. As to quaternary structure, homohexamer. The cofactor is Mg(2+).

It localises to the cytoplasm. It carries out the reaction diphosphate + H2O = 2 phosphate + H(+). Functionally, catalyzes the hydrolysis of inorganic pyrophosphate (PPi) forming two phosphate ions. In Chlamydia caviae (strain ATCC VR-813 / DSM 19441 / 03DC25 / GPIC) (Chlamydophila caviae), this protein is Inorganic pyrophosphatase.